Reading from the N-terminus, the 310-residue chain is Protein FIP2 (310 aa).

The disordered stretch occupies residues 1 to 58 (MGFAPVTPAAVETYDPDVDHDDESNGLDGFRVRSKRSGKFSGGYSDSPREVGDGYGVR). The span at 14–25 (YDPDVDHDDESN) shows a compositional bias: acidic residues. Phosphoserine is present on residues Ser77 and Ser105. Disordered regions lie at residues 115–135 (ATRL…GSGG), 152–171 (FKPK…LDYD), and 177–221 (DRAE…GSSS). Positions 208-221 (PRNTGASNGYGSSS) are enriched in polar residues.

As to quaternary structure, interacts with FRI. Interacts with WAV3.

This is Protein FIP2 from Arabidopsis thaliana (Mouse-ear cress).